The chain runs to 152 residues: MSASLSRAAAALLRWGRSAGGGGLPGAGVRAASSGGQAEQLDALVKKDKVVVFLKGTPEQPQCGFSNAVVQILRLHGVRDYAAYNVLDDPELRQGIKDYSNWPTIPQVYLNGEFVGGCDILLQMHQNGDLVEELKKLGIRSALVDEKDQDSK.

The N-terminal 31 residues, 1–31, are a transit peptide targeting the mitochondrion; that stretch reads MSASLSRAAAALLRWGRSAGGGGLPGAGVRA. The region spanning 38 to 141 is the Glutaredoxin domain; sequence AEQLDALVKK…EELKKLGIRS (104 aa). Lys55 is a binding site for glutathione. Lys55 carries the post-translational modification N6-succinyllysine. Cys63 contacts [2Fe-2S] cluster. Glutathione is bound by residues 93-97, Ile105, and 118-119; these read RQGIK and CD. Ser151 bears the Phosphoserine mark.

The protein belongs to the glutaredoxin family. Monothiol subfamily. In terms of assembly, homodimer. Interacts with ISCU. Interacts with BOLA1. As to expression, detected in bone, liver, muscle and kidney.

It localises to the mitochondrion matrix. In terms of biological role, monothiol glutaredoxin involved in mitochondrial iron-sulfur (Fe/S) cluster transfer. Receives 2Fe/2S clusters from scaffold protein ISCU and mediates their transfer to apoproteins, to the 4Fe/FS cluster biosynthesis machinery, or export from mitochondrion. Required for normal regulation of hemoglobin synthesis by the iron-sulfur protein ACO1. The polypeptide is Glutaredoxin-related protein 5, mitochondrial (Glrx5) (Mus musculus (Mouse)).